A 940-amino-acid chain; its full sequence is UvrABC system protein A (940 aa).

Position 33 to 40 (G33 to S40) interacts with ATP. A C4-type zinc finger spans residues C252–C279. 2 ABC transporter domains span residues W309–L586 and I606–K935. G639–S646 provides a ligand contact to ATP. The C4-type zinc finger occupies C738–C764.

The protein belongs to the ABC transporter superfamily. UvrA family. In terms of assembly, forms a heterotetramer with UvrB during the search for lesions.

It is found in the cytoplasm. Functionally, the UvrABC repair system catalyzes the recognition and processing of DNA lesions. UvrA is an ATPase and a DNA-binding protein. A damage recognition complex composed of 2 UvrA and 2 UvrB subunits scans DNA for abnormalities. When the presence of a lesion has been verified by UvrB, the UvrA molecules dissociate. The chain is UvrABC system protein A from Lactococcus lactis subsp. lactis (strain IL1403) (Streptococcus lactis).